We begin with the raw amino-acid sequence, 532 residues long: 2,3-bisphosphoglycerate-independent phosphoglycerate mutase (532 aa).

Mn(2+) is bound by residues D15 and S65. The active-site Phosphoserine intermediate is the S65. Substrate-binding positions include H126, 156 to 157 (RD), R188, R194, 258 to 261 (RPDR), and K331. Positions 398, 402, 439, 440, and 457 each coordinate Mn(2+).

It belongs to the BPG-independent phosphoglycerate mutase family. As to quaternary structure, monomer. Requires Mn(2+) as cofactor.

It carries out the reaction (2R)-2-phosphoglycerate = (2R)-3-phosphoglycerate. It functions in the pathway carbohydrate degradation; glycolysis; pyruvate from D-glyceraldehyde 3-phosphate: step 3/5. In terms of biological role, catalyzes the interconversion of 2-phosphoglycerate and 3-phosphoglycerate. This chain is 2,3-bisphosphoglycerate-independent phosphoglycerate mutase, found in Gloeothece citriformis (strain PCC 7424) (Cyanothece sp. (strain PCC 7424)).